The sequence spans 554 residues: Dihydroxy-acid dehydratase (554 aa).

C48 contacts [2Fe-2S] cluster. A Mg(2+)-binding site is contributed by D80. [2Fe-2S] cluster is bound at residue C121. D122 and K123 together coordinate Mg(2+). K123 carries the post-translational modification N6-carboxylysine. C193 contacts [2Fe-2S] cluster. E444 provides a ligand contact to Mg(2+). S470 functions as the Proton acceptor in the catalytic mechanism.

The protein belongs to the IlvD/Edd family. In terms of assembly, homodimer. [2Fe-2S] cluster serves as cofactor. It depends on Mg(2+) as a cofactor.

It carries out the reaction (2R)-2,3-dihydroxy-3-methylbutanoate = 3-methyl-2-oxobutanoate + H2O. It catalyses the reaction (2R,3R)-2,3-dihydroxy-3-methylpentanoate = (S)-3-methyl-2-oxopentanoate + H2O. Its pathway is amino-acid biosynthesis; L-isoleucine biosynthesis; L-isoleucine from 2-oxobutanoate: step 3/4. It participates in amino-acid biosynthesis; L-valine biosynthesis; L-valine from pyruvate: step 3/4. Its function is as follows. Functions in the biosynthesis of branched-chain amino acids. Catalyzes the dehydration of (2R,3R)-2,3-dihydroxy-3-methylpentanoate (2,3-dihydroxy-3-methylvalerate) into 2-oxo-3-methylpentanoate (2-oxo-3-methylvalerate) and of (2R)-2,3-dihydroxy-3-methylbutanoate (2,3-dihydroxyisovalerate) into 2-oxo-3-methylbutanoate (2-oxoisovalerate), the penultimate precursor to L-isoleucine and L-valine, respectively. The sequence is that of Dihydroxy-acid dehydratase from Tremblaya princeps.